A 224-amino-acid chain; its full sequence is Large ribosomal subunit protein uL1 (224 aa).

It belongs to the universal ribosomal protein uL1 family. Part of the 50S ribosomal subunit.

Its function is as follows. Binds directly to 23S rRNA. The L1 stalk is quite mobile in the ribosome, and is involved in E site tRNA release. In terms of biological role, protein L1 is also a translational repressor protein, it controls the translation of the L11 operon by binding to its mRNA. This chain is Large ribosomal subunit protein uL1, found in Borrelia duttonii (strain Ly).